Consider the following 283-residue polypeptide: Thymidylate synthase (283 aa).

Arg-22 contributes to the dUMP binding site. The Nucleophile role is filled by Cys-160. DUMP contacts are provided by residues 180–183, Asn-191, and 221–223; these read RSCD and HIY. Asp-183 is a binding site for (6R)-5,10-methylene-5,6,7,8-tetrahydrofolate. Ser-282 provides a ligand contact to (6R)-5,10-methylene-5,6,7,8-tetrahydrofolate.

Belongs to the thymidylate synthase family. Bacterial-type ThyA subfamily. In terms of assembly, homodimer.

It localises to the cytoplasm. It catalyses the reaction dUMP + (6R)-5,10-methylene-5,6,7,8-tetrahydrofolate = 7,8-dihydrofolate + dTMP. Its pathway is pyrimidine metabolism; dTTP biosynthesis. Its function is as follows. Catalyzes the reductive methylation of 2'-deoxyuridine-5'-monophosphate (dUMP) to 2'-deoxythymidine-5'-monophosphate (dTMP) while utilizing 5,10-methylenetetrahydrofolate (mTHF) as the methyl donor and reductant in the reaction, yielding dihydrofolate (DHF) as a by-product. This enzymatic reaction provides an intracellular de novo source of dTMP, an essential precursor for DNA biosynthesis. This is Thymidylate synthase from Pasteurella multocida (strain Pm70).